The sequence spans 369 residues: Cyclin-dependent kinase 5 activator 2 (369 aa).

Residues 1–11 (MGTVLSLSPAS) show a composition bias toward polar residues. Disordered stretches follow at residues 1 to 55 (MGTV…SRLK), 72 to 176 (ASAK…SPRR), and 330 to 369 (EAAA…NLDR). A lipid anchor (N-myristoyl glycine) is attached at G2. A compositionally biased stretch (basic residues) spans 74 to 84 (AKKKKGSKKVT). T84 carries the post-translational modification Phosphothreonine. Residues 99–112 (RNRENLLRKGRDGP) show a composition bias toward basic and acidic residues. Residues 122 to 144 (AVPVPTVPTTAATCEPPSGGSAA) show a composition bias toward low complexity. Residues 145 to 171 (APPPGSGGGKPPPPPPPAPQAAPPAPG) are compositionally biased toward pro residues. Over residues 331–352 (AAASTGGPPSGSSASTTSSSSA) the composition is skewed to low complexity.

This sequence belongs to the cyclin-dependent kinase 5 activator family. Heterodimer of a catalytic subunit and a regulatory subunit. Myristoylated. The Gly-2-Ala mutant is absent of the cell periphery, suggesting that a proper myristoylation signal is essential for the proper distribution of CDK5R2 (p39).

The protein resides in the cell membrane. In terms of biological role, activator of CDK5/TPKII. This Mus musculus (Mouse) protein is Cyclin-dependent kinase 5 activator 2 (Cdk5r2).